Here is a 1218-residue protein sequence, read N- to C-terminus: Protein dispatched (1218 aa).

A helical transmembrane segment spans residues Y21–L41. Positions V99–D135 are disordered. A compositionally biased stretch (basic residues) spans H104–K124. N-linked (GlcNAc...) asparagine glycans are attached at residues N127, N176, N197, N264, N319, and N388. Residues A430–I624 enclose the SSD domain. A run of 6 helical transmembrane segments spans residues L443–W463, L473–V493, L504–I524, A570–S590, C598–L618, and A670–W690. N767, N883, and N891 each carry an N-linked (GlcNAc...) asparagine glycan. The next 5 helical transmembrane spans lie at L975–V995, S996–L1016, I1019–Y1039, I1058–A1078, and I1087–M1107.

The protein belongs to the dispatched family.

The protein resides in the membrane. In terms of biological role, segment polarity protein which functions in hedgehog (Hh) signaling. Regulates the trafficking and the release of cholesterol-modified hedgehog protein from cells of the posterior compartment (P cells) and is hence required for the effective production of the Hh signal. This Drosophila melanogaster (Fruit fly) protein is Protein dispatched (disp).